A 338-amino-acid polypeptide reads, in one-letter code: ATP synthase subunit a (338 aa).

Residues 15-35 (IAVLVMPLLLGFGAPIYAAAE) traverse the membrane as a helical segment. The segment at 45–66 (AAAVHTDEAHGEAGEHAEGGHG) is disordered. Basic and acidic residues predominate over residues 49–65 (HTDEAHGEAGEHAEGGH). Transmembrane regions (helical) follow at residues 109–129 (HVVF…YVGN), 174–194 (LLTV…PYGA), 199–219 (NINV…VSAI), 238–258 (ALWI…PFAL), 262–282 (LFAN…ISFI), 287–307 (IVAI…EIFV), and 308–328 (SFLQ…LGSA).

It belongs to the ATPase A chain family. In terms of assembly, F-type ATPases have 2 components, CF(1) - the catalytic core - and CF(0) - the membrane proton channel. CF(1) has five subunits: alpha(3), beta(3), gamma(1), delta(1), epsilon(1). CF(0) has four main subunits: a, b, b' and c.

It localises to the cell inner membrane. Its function is as follows. Key component of the proton channel; it plays a direct role in the translocation of protons across the membrane. This Chlorobium phaeobacteroides (strain BS1) protein is ATP synthase subunit a.